A 716-amino-acid polypeptide reads, in one-letter code: Probable extracellular serine carboxypeptidase (716 aa).

An N-terminal signal peptide occupies residues 1–17; sequence MVKLTACLLLLVAAVQA. 2 N-linked (GlcNAc...) asparagine glycosylation sites follow: asparagine 143 and asparagine 174. The active-site Charge relay system is the serine 188. N-linked (GlcNAc...) asparagine glycosylation is found at asparagine 258 and asparagine 354. Residue aspartate 466 is the Charge relay system of the active site. Residues asparagine 507 and asparagine 550 are each glycosylated (N-linked (GlcNAc...) asparagine). The interval 617-636 is disordered; that stretch reads RDLAAQPSKSKKDRRGQQLS. The helical transmembrane segment at 652-672 threads the bilayer; that stretch reads LGFVSFLVFAFSSFTFIPDIE.

Belongs to the peptidase S28 family.

The protein resides in the membrane. The protein localises to the secreted. In Arthroderma benhamiae (strain ATCC MYA-4681 / CBS 112371) (Trichophyton mentagrophytes), this protein is Probable extracellular serine carboxypeptidase.